Here is a 150-residue protein sequence, read N- to C-terminus: CCAAT/enhancer-binding protein gamma (150 aa).

Lys-3 is covalently cross-linked (Glycyl lysine isopeptide (Lys-Gly) (interchain with G-Cter in SUMO2)). The disordered stretch occupies residues 27–94 (GLQQVPQLVP…QKAQDTLQRV (68 aa)). The segment covering 28–37 (LQQVPQLVPA) has biased composition (low complexity). The span at 56–72 (SPMDRNSDEYRQRRERN) shows a compositional bias: basic and acidic residues. One can recognise a bZIP domain in the interval 62–125 (SDEYRQRRER…SVLKDLFLEH (64 aa)). A basic motif region spans residues 66–93 (RQRRERNNMAVKKSRLKSKQKAQDTLQR). Residues 97-118 (LKEENERLEAKIKLLTKELSVL) are leucine-zipper.

Belongs to the bZIP family. C/EBP subfamily. As to quaternary structure, binds DNA as a dimer and can form stable heterodimers with CEBPA and CEBPB. Interacts with ZNF638; this interaction increases transcriptional activation.

The protein localises to the nucleus. Transcription factor that binds to the promoter and the enhancer regions of target genes. Binds to the enhancer element PRE-I (positive regulatory element-I) of the IL-4 gene. Binds to the promoter and the enhancer of the immunoglobulin heavy chain. Binds to GPE1, a cis-acting element in the G-CSF gene promoter. The polypeptide is CCAAT/enhancer-binding protein gamma (CEBPG) (Homo sapiens (Human)).